Consider the following 226-residue polypeptide: 7-cyano-7-deazaguanine synthase (226 aa).

8–18 lines the ATP pocket; sequence LSGGLDSTTVL. Zn(2+)-binding residues include Cys-190, Cys-198, Cys-201, and Cys-204.

Belongs to the QueC family. Homodimer. It depends on Zn(2+) as a cofactor.

The enzyme catalyses 7-carboxy-7-deazaguanine + NH4(+) + ATP = 7-cyano-7-deazaguanine + ADP + phosphate + H2O + H(+). It functions in the pathway purine metabolism; 7-cyano-7-deazaguanine biosynthesis. In terms of biological role, catalyzes the ATP-dependent conversion of 7-carboxy-7-deazaguanine (CDG) to 7-cyano-7-deazaguanine (preQ(0)). This Clostridium kluyveri (strain ATCC 8527 / DSM 555 / NBRC 12016 / NCIMB 10680 / K1) protein is 7-cyano-7-deazaguanine synthase.